Reading from the N-terminus, the 630-residue chain is Multidrug transporter TPO3 (630 aa).

Positions Met-1–Pro-35 are enriched in polar residues. Disordered stretches follow at residues Met-1 to Leu-46 and Thr-107 to Pro-157. Basic and acidic residues predominate over residues Asn-37–Leu-46. Residues Arg-125–Ser-137 show a composition bias toward low complexity. Asn-135 carries an N-linked (GlcNAc...) asparagine glycan. 12 helical membrane passes run Ile-190–Phe-210, Ala-222–Ser-242, Leu-252–Pro-272, Phe-282–Met-302, Ile-312–Phe-332, Leu-342–Pro-362, Phe-423–Phe-443, Leu-453–Phe-473, Leu-494–Thr-514, Ile-519–Tyr-539, Tyr-553–Phe-575, and Trp-587–Tyr-607.

Belongs to the major facilitator superfamily. DHA1 family. Polyamines/proton antiporter (TC 2.A.1.2.16) subfamily.

Its subcellular location is the cell membrane. Functionally, cell membrane polyamine/proton antiporter, involved in the detoxification of excess polyamines in the cytoplasm. Involved in the resistance to the imidazole antifungal drugs tioconazole, miconazole, clotrimazole and ketoconazole; to the triazole fluconazole; but not to the antifungals flucytosine or amphotericin B. Plays a role in spermine homeostasis, but spermine accumulation in response to clotrimazole is independent of TPO3. This chain is Multidrug transporter TPO3, found in Candida glabrata (strain ATCC 2001 / BCRC 20586 / JCM 3761 / NBRC 0622 / NRRL Y-65 / CBS 138) (Yeast).